Reading from the N-terminus, the 212-residue chain is Peptide methionine sulfoxide reductase MsrA (212 aa).

Residue C52 is part of the active site.

This sequence belongs to the MsrA Met sulfoxide reductase family.

The catalysed reaction is L-methionyl-[protein] + [thioredoxin]-disulfide + H2O = L-methionyl-(S)-S-oxide-[protein] + [thioredoxin]-dithiol. The enzyme catalyses [thioredoxin]-disulfide + L-methionine + H2O = L-methionine (S)-S-oxide + [thioredoxin]-dithiol. In terms of biological role, has an important function as a repair enzyme for proteins that have been inactivated by oxidation. Catalyzes the reversible oxidation-reduction of methionine sulfoxide in proteins to methionine. In Salmonella newport (strain SL254), this protein is Peptide methionine sulfoxide reductase MsrA.